The chain runs to 425 residues: RNA polymerase II-associated factor 1 homolog (425 aa).

Residues 152–174 (KKNQQVEDMYRDKQSQIDAINKT) adopt a coiled-coil conformation. The segment at 331–425 (SRKSKLTLTY…KEPTVDSDSD (95 aa)) is disordered. 2 stretches are compositionally biased toward basic and acidic residues: residues 344–380 (SELE…KEEG) and 393–402 (DKPQKSRSDS).

Belongs to the PAF1 family. As to quaternary structure, component of the PAF1 complex which consists of at least cdc-73, ctr-9, leo-1, pafo-1 and rtfo-1.

It localises to the nucleus. In terms of biological role, component of the PAF1 complex which is a multifunctional complex involved in transcription initiation via genetic interactions with TATA-binding proteins, elongation and transcription-coupled histone modification. This is RNA polymerase II-associated factor 1 homolog from Caenorhabditis elegans.